The sequence spans 344 residues: uncharacterized protein (344 aa).

The first 28 residues, 1–28, serve as a signal peptide directing secretion; that stretch reads MNKKSLNIVATLGILLVLAFSGCVDQSA.

The protein belongs to the bacterial solute-binding protein 1 family. WtpA subfamily.

This is an uncharacterized protein from Methanococcus maripaludis (strain C7 / ATCC BAA-1331).